The primary structure comprises 256 residues: C-8 sterol isomerase (256 aa).

The disordered stretch occupies residues 1 to 31; it reads MPPKKQSSSGGNKPSGSGSSSGRSSSGSSCR. Low complexity predominate over residues 7-30; that stretch reads SSSGGNKPSGSGSSSGRSSSGSSC. The chain crosses the membrane as a helical span at residues 40 to 60; the sequence is IGGWLKFFAILFALVAPIAYV.

The protein belongs to the ERG2 family.

The protein localises to the endoplasmic reticulum membrane. The protein operates within steroid metabolism; ergosterol biosynthesis; ergosterol from zymosterol: step 2/5. Catalyzes the reaction which results in unsaturation at C-7 in the B ring of sterols. The sequence is that of C-8 sterol isomerase (erg-1) from Neurospora crassa (strain ATCC 24698 / 74-OR23-1A / CBS 708.71 / DSM 1257 / FGSC 987).